The sequence spans 539 residues: MAKDPGRVLIFDTTLRDGEQSPGASLNLEEKLAIAQQLARLGVDVIEAGFPFASPGDFAAVQKIAENVGGEEGPIICGLSRASKPDIKACANAIAPAPKKRIHTFIATSDIHLEHKLRKSRKEVLDIVPDMVGYAKSFVDDVEFSCEDAARSDLDFLYEVIELAISSGANTINIPDTVGYITPSEFGDLILNINENVPNINEAVLSVHGHNDLGLAVANFLEAVKNGARQLECTINGIGERAGNAALEELIMALHVRRSYFNPFFGRPPESPTPLTAVRTEEITKSSRLVSNLTGMVVQPNKAIVGANAFAHESGIHQDGVLKNRLTYEIIDAKTVGLSDNKISLGKLSGRSAVRARLEDLGYDLNREDLNDAFARFKDLADRKREITDRDLEAIVSEQVQLPEALFQLKLVQVSCGTSLMPTATVTVVGEDGEEKTAVSLGTGPVDAVVRALDSLTEEPNELIEFSVKSVTEGIDALGEVTIRIRRDGNLFSGHSADTDVVVAAAQAYINALNRLVAAHGRKSIHPQHDLAKVDKKGI.

A Pyruvate carboxyltransferase domain is found at 8–269 (VLIFDTTLRD…YFNPFFGRPP (262 aa)). Mn(2+)-binding residues include aspartate 17, histidine 208, histidine 210, and asparagine 244. The interval 408–539 (QLKLVQVSCG…DLAKVDKKGI (132 aa)) is regulatory domain.

The protein belongs to the alpha-IPM synthase/homocitrate synthase family. LeuA type 1 subfamily. In terms of assembly, homodimer. The cofactor is Mn(2+).

The protein resides in the cytoplasm. It carries out the reaction 3-methyl-2-oxobutanoate + acetyl-CoA + H2O = (2S)-2-isopropylmalate + CoA + H(+). Its pathway is amino-acid biosynthesis; L-leucine biosynthesis; L-leucine from 3-methyl-2-oxobutanoate: step 1/4. In terms of biological role, catalyzes the condensation of the acetyl group of acetyl-CoA with 3-methyl-2-oxobutanoate (2-ketoisovalerate) to form 3-carboxy-3-hydroxy-4-methylpentanoate (2-isopropylmalate). The chain is 2-isopropylmalate synthase from Prochlorococcus marinus (strain NATL1A).